The sequence spans 365 residues: Phosphatidylcholine:ceramide cholinephosphotransferase 4 (365 aa).

Residues 1–44 (MISYPFFSLSPPGLVPPPMAVPPVEMYSGSFWNRMRKPLPLRTQ) are Cytoplasmic-facing. The chain crosses the membrane as a helical span at residues 45–65 (VIRFTVVFVIVSFILAVALQI). Over 66–92 (THERMPDPKVTKPLPDLGFELLTKVPG) the chain is Lumenal. Residues 93–113 (MYVLADCCIGFLNILSVFTAF) traverse the membrane as a helical segment. The Cytoplasmic portion of the chain corresponds to 114–165 (KLYLLHRHCVGSGEPELPCNIPGVSRFFLSVWLCKENCRIELRNIHTIAWIR). Residues 166–186 (FITSYALLLLFRSAVIVMTSL) traverse the membrane as a helical segment. Over 187–229 (PAPDDLCQDPPKIENPVKNVILTVLTAGGGSIHCGDLMYSGHT) the chain is Lumenal. The active site involves His-228. Residues 230–250 (VILTLHLMFHWIYGAMVHWSF) form a helical membrane-spanning segment. Position 251 (Arg-251) is a topological domain, cytoplasmic. Residues 252–272 (PVVTVVAIFGYYCIVASRFHY) form a helical membrane-spanning segment. Catalysis depends on residues His-271 and Asp-275. Residues 273–275 (TDD) are Lumenal-facing. Residues 276 to 296 (VLVAIYLTIATFIAVGHNADG) traverse the membrane as a helical segment. Over 297–365 (APWQLQLFIR…SLMFKCGAYV (69 aa)) the chain is Cytoplasmic.

Belongs to the sphingomyelin synthase family.

The protein localises to the golgi apparatus membrane. The catalysed reaction is an N-acylsphing-4-enine + a 1,2-diacyl-sn-glycero-3-phosphocholine = a sphingomyelin + a 1,2-diacyl-sn-glycerol. It catalyses the reaction an N-acylsphinganine + a 1,2-diacyl-sn-glycero-3-phosphocholine = an N-acylsphinganine-1-phosphocholine + a 1,2-diacyl-sn-glycerol. It carries out the reaction an N-acylsphing-4-enine + a 1,2-diacyl-sn-glycero-3-phosphoethanolamine = an N-acylsphing-4-enine 1-phosphoethanolamine + a 1,2-diacyl-sn-glycerol. The enzyme catalyses an N-acylsphinganine + a 1,2-diacyl-sn-glycero-3-phosphoethanolamine = an N-acylsphinganine-1-phosphoethanolamine + a 1,2-diacyl-sn-glycerol. The catalysed reaction is a 1,2-diacyl-sn-glycero-3-phospho-(1D-myo-inositol) + an N-acylsphing-4-enine = an N-acylsphing-4-enine-(1D-myo-inositol) + a 1,2-diacyl-sn-glycerol. It catalyses the reaction an N-acylsphinganine + a 1,2-diacyl-sn-glycero-3-phospho-(1D-myo-inositol) = an N-acylsphinganine-(1D-myo-inositol) + a 1,2-diacyl-sn-glycerol. Its function is as follows. Bifunctional sphingomyelin (SM)/ethanolamine phosphorylceramide (EPC) synthase with minimal inositol phosphorylceramide (IPC) synthase activity. Specificity is likely to be defined by residues in the lumenal catalytic domain that interact with the polar head groups of the phospholipid donors. SM is synthesized by both stages of the parasite life cycle, bloodstream forms (BSF) and procyclic forms (PCF), by transferring the phosphoryl headgroup from a 1,2-diacyl-sn-glycero-3-phosphocholine to an N-acylsphing-4-enine (ceramide) or an N-acylsphinganine (dihydroceramide) with release of 1,2-diacyl-sn-glycerol. Also catalyzes the reverse reaction, production of ceramide from sphingomyelin. EPC is synthesized by transferring phosphoethanolamine from a 1,2-diacyl-sn-glycero-3-phosphoethanolamine to ceramide or dihydroceramide by BSF and PCF, while IPC is confined to PCF. The ceramide/dihydroceramide ratios are skewed towards dihydroceramide in PCF parasites and ceramide in BSF parasites, this is likely due to differential expression and/or regulation of dihydroceramide desaturase, the enzyme responsible for converting dihydroceramide to ceramide. This chain is Phosphatidylcholine:ceramide cholinephosphotransferase 4, found in Trypanosoma brucei brucei.